Reading from the N-terminus, the 351-residue chain is Nuclear inhibitor of protein phosphatase 1 (351 aa).

Residues 1–142 (MAAAVNSGSS…LPSAVKGDEK (142 aa)) are interaction with CDC5L, SF3B1 and MELK. In terms of domain architecture, FHA spans 49-101 (YLFGRNPDLCDFTIDHQSCSRVHAALVYHKHLKRVFLIDLNSTHGTFLGHIRL). Residues 143-224 (MGGEDDELKG…VDPSVGRFRN (82 aa)) are interaction with EED. Phosphothreonine is present on Thr161. A phosphoserine mark is found at Ser178 and Ser199. 2 consecutive short sequence motifs (nuclear localization signal) follow at residues 185–209 (GNLDIQRPKRKRKNSRVTFSEDDEI) and 210–240 (INPEDVDPSVGRFRNMVQTAVVPVKKKRMEG). An involved in PP-1 inhibition region spans residues 191–200 (RPKRKRKNSR). Residues 200 to 203 (RVTF) form an involved in PP-1 binding region. At Ser204 the chain carries Phosphoserine. Residue Ser249 is modified to Phosphoserine. The residue at position 264 (Tyr264) is a Phosphotyrosine. The tract at residues 310–329 (AVAINPTPNPAVYNPEAVNE) is interaction with EED. The segment at 314–351 (NPTPNPAVYNPEAVNEPKKKKYAKEAWPGKKPTPSLLI) is disordered. The tract at residues 330–351 (PKKKKYAKEAWPGKKPTPSLLI) is RNA-binding. Positions 331 to 337 (KKKKYAK) are involved in PP-1 inhibition. Tyr335 is subject to Phosphotyrosine.

As to quaternary structure, interacts with phosphorylated CDC5L, SF3B1 and MELK. Part of the spliceosome. Interacts with PPP1CA, PPP1CB and PPP1CC. Interacts with EED. Part of a complex consisting of PPP1R8, EED, HDAC2 and PP-1. In terms of processing, may be inactivated by phosphorylation on Ser-199 or Ser-204.

It localises to the nucleus. It is found in the nucleus speckle. Inhibitor subunit of the major nuclear protein phosphatase-1 (PP-1). It has RNA-binding activity but does not cleave RNA and may target PP-1 to RNA-associated substrates. May also be involved in pre-mRNA splicing. Binds DNA and might act as a transcriptional repressor. Essential for cell proliferation and early embryonic development. This is Nuclear inhibitor of protein phosphatase 1 (Ppp1r8) from Mus musculus (Mouse).